Reading from the N-terminus, the 431-residue chain is Trigger factor (431 aa).

Residues 160–245 (DDRVTIDFVG…VKKVEVMVLP (86 aa)) form the PPIase FKBP-type domain.

This sequence belongs to the FKBP-type PPIase family. Tig subfamily.

It localises to the cytoplasm. The enzyme catalyses [protein]-peptidylproline (omega=180) = [protein]-peptidylproline (omega=0). In terms of biological role, involved in protein export. Acts as a chaperone by maintaining the newly synthesized protein in an open conformation. Functions as a peptidyl-prolyl cis-trans isomerase. The polypeptide is Trigger factor (Mannheimia succiniciproducens (strain KCTC 0769BP / MBEL55E)).